The following is a 306-amino-acid chain: Acyl transferase (306 aa).

Residues S117, D214, and H244 each act as charge relay system in the active site.

The protein belongs to the LuxD family.

It participates in lipid metabolism; fatty acid reduction for biolumincescence. Acyl transferase is part of the fatty acid reductase system required for aldehyde biosynthesis; it produces fatty acids for the luminescent reaction. In Photobacterium phosphoreum, this protein is Acyl transferase.